The following is a 247-amino-acid chain: GTP cyclohydrolase 1 type 2 homolog (247 aa).

Residues His-63, His-64, Asp-101, His-215, and Glu-219 each coordinate a divalent metal cation.

Belongs to the GTP cyclohydrolase I type 2/NIF3 family. Toroid-shaped homohexamer. In the hexamer, 3 dimers assemble to form a ring-like structure surrounding a central hole.

In terms of biological role, provides significant protection from radiation damage and may be involved in the degradation of radiation-damaged nucleotides. The protein is GTP cyclohydrolase 1 type 2 homolog (ybgI) of Salmonella typhi.